The chain runs to 181 residues: Adenylyl-sulfate kinase (181 aa).

20 to 27 contacts ATP; sequence GLSGAGKS. The active-site Phosphoserine intermediate is the Ser-94.

This sequence belongs to the APS kinase family.

It carries out the reaction adenosine 5'-phosphosulfate + ATP = 3'-phosphoadenylyl sulfate + ADP + H(+). Its pathway is sulfur metabolism; hydrogen sulfide biosynthesis; sulfite from sulfate: step 2/3. Its function is as follows. Catalyzes the synthesis of activated sulfate. This is Adenylyl-sulfate kinase from Deinococcus geothermalis (strain DSM 11300 / CIP 105573 / AG-3a).